Reading from the N-terminus, the 275-residue chain is 2,3,4,5-tetrahydropyridine-2,6-dicarboxylate N-succinyltransferase (275 aa).

Belongs to the transferase hexapeptide repeat family.

The protein localises to the cytoplasm. It carries out the reaction (S)-2,3,4,5-tetrahydrodipicolinate + succinyl-CoA + H2O = (S)-2-succinylamino-6-oxoheptanedioate + CoA. Its pathway is amino-acid biosynthesis; L-lysine biosynthesis via DAP pathway; LL-2,6-diaminopimelate from (S)-tetrahydrodipicolinate (succinylase route): step 1/3. The chain is 2,3,4,5-tetrahydropyridine-2,6-dicarboxylate N-succinyltransferase from Burkholderia multivorans (strain ATCC 17616 / 249).